The chain runs to 113 residues: MNTVRATFLLVFVLAVSLGQADKDENRMEMQEKTEQGKSYLDFAENLLLQKLEELEAKLLEEDSEESRNSRQKRCIGEGVPCDENDPRCCSGLVCLKPTLHGIWYKSYYCYKK.

The N-terminal stretch at 1 to 21 (MNTVRATFLLVFVLAVSLGQA) is a signal peptide. A propeptide spanning residues 22–74 (DKDENRMEMQEKTEQGKSYLDFAENLLLQKLEELEAKLLEEDSEESRNSRQKR) is cleaved from the precursor. Over residues 60 to 69 (LEEDSEESRN) the composition is skewed to basic and acidic residues. The interval 60-82 (LEEDSEESRNSRQKRCIGEGVPC) is disordered. Intrachain disulfides connect cysteine 75–cysteine 90, cysteine 82–cysteine 95, and cysteine 89–cysteine 110.

It belongs to the neurotoxin 14 (magi-1) family. 01 (HNTX-16) subfamily. As to expression, expressed by the venom gland.

The protein localises to the secreted. Probable ion channel inhibitor. The polypeptide is U11-theraphotoxin-Hhn1a (Cyriopagopus hainanus (Chinese bird spider)).